The chain runs to 359 residues: Putative mannose-1-phosphate guanyltransferase (359 aa).

This sequence belongs to the transferase hexapeptide repeat family.

It catalyses the reaction alpha-D-mannose 1-phosphate + GTP + H(+) = GDP-alpha-D-mannose + diphosphate. The polypeptide is Putative mannose-1-phosphate guanyltransferase (mpg1) (Sulfolobus acidocaldarius (strain ATCC 33909 / DSM 639 / JCM 8929 / NBRC 15157 / NCIMB 11770)).